The chain runs to 619 residues: Very-long-chain aldehyde decarbonylase GL1-4 (619 aa).

The next 5 helical transmembrane spans lie at 45–65 (IAFS…QIWI), 94–114 (GWDD…LAMP), 126–146 (GAVV…YWFH), 178–198 (FAEH…TIYL), and 325–345 (AWYM…AWIY). The Fatty acid hydroxylase domain maps to 138–272 (VEFLYYWFHR…MPFYDYIYNT (135 aa)).

This sequence belongs to the sterol desaturase family. In terms of assembly, homodimer. As to expression, expressed ubiquitously at low levels, with higher accumulation in developing panicles, shoots and flag leaves.

Its subcellular location is the endoplasmic reticulum membrane. It carries out the reaction a long-chain fatty aldehyde + 2 NADPH + O2 + H(+) = a long-chain alkane + formate + 2 NADP(+) + H2O. Functionally, aldehyde decarbonylase involved in the conversion of aldehydes to alkanes. Core component of a very-long-chain alkane synthesis complex. The polypeptide is Very-long-chain aldehyde decarbonylase GL1-4 (Oryza sativa subsp. japonica (Rice)).